We begin with the raw amino-acid sequence, 596 residues long: Elongation factor 4 (596 aa).

The tr-type G domain maps to K2–V184. GTP-binding positions include D14–T19 and N131–D134.

This sequence belongs to the TRAFAC class translation factor GTPase superfamily. Classic translation factor GTPase family. LepA subfamily.

The protein localises to the cell inner membrane. It catalyses the reaction GTP + H2O = GDP + phosphate + H(+). Its function is as follows. Required for accurate and efficient protein synthesis under certain stress conditions. May act as a fidelity factor of the translation reaction, by catalyzing a one-codon backward translocation of tRNAs on improperly translocated ribosomes. Back-translocation proceeds from a post-translocation (POST) complex to a pre-translocation (PRE) complex, thus giving elongation factor G a second chance to translocate the tRNAs correctly. Binds to ribosomes in a GTP-dependent manner. The chain is Elongation factor 4 from Shewanella denitrificans (strain OS217 / ATCC BAA-1090 / DSM 15013).